A 718-amino-acid chain; its full sequence is Cyclomaltodextrin glucanotransferase (718 aa).

An N-terminal signal peptide occupies residues 1 to 34 (MFQMAKRVLLSTTLTFSLLAGSALPFLPASAIYA). An A1 region spans residues 35 to 172 (DADTAVTNKQ…GIKIIIDFAP (138 aa)). Asp61, Asn63, Asn66, and Asn67 together coordinate Ca(2+). A disulfide bridge connects residues Cys77 and Cys84. Residues Gly85 and Asp87 each coordinate Ca(2+). 134–135 (YW) lines the substrate pocket. Asn173 contacts Ca(2+). The b stretch occupies residues 173-236 (NHTSPAMETD…NLYDLADLNH (64 aa)). His174 is a binding site for substrate. A Ca(2+)-binding site is contributed by Ile224. Substrate is bound at residue 227 to 230 (NLYD). Asp233 is a Ca(2+) binding site. Residues 237-440 (NNSTIDTYFK…LRKSNPAIAY (204 aa)) are A2. A substrate-binding site is contributed by Arg261. The active-site Nucleophile is the Asp263. 266-267 (KH) serves as a coordination point for substrate. His267 provides a ligand contact to Ca(2+). Residue Glu291 is the Proton donor of the active site. The substrate site is built by His361, Asp405, and Arg409. Positions 441-528 (GSTQQRWINN…ATAVWQYTAS (88 aa)) are c. The interval 529–614 (ETTPTIGHVG…SNAYNDFTIL (86 aa)) is d. One can recognise an IPT/TIG domain in the interval 532–612 (PTIGHVGPVM…VNSNAYNDFT (81 aa)). Residues 613–718 (ILSGDQVSVR…GTATVTINWQ (106 aa)) form the CBM20 domain. The e stretch occupies residues 615-718 (SGDQVSVRFV…GTATVTINWQ (104 aa)).

The protein belongs to the glycosyl hydrolase 13 family. As to quaternary structure, monomer. It depends on Ca(2+) as a cofactor.

It localises to the secreted. The catalysed reaction is Cyclizes part of a (1-&gt;4)-alpha-D-glucan chain by formation of a (1-&gt;4)-alpha-D-glucosidic bond.. The protein is Cyclomaltodextrin glucanotransferase (cgtA) of Bacillus licheniformis.